We begin with the raw amino-acid sequence, 255 residues long: Type III pantothenate kinase (255 aa).

An ATP-binding site is contributed by 6–13 (DIGNTNIK). Residue 107 to 110 (GADR) coordinates substrate. The Proton acceptor role is filled by Asp109. Residue Thr132 participates in ATP binding. Thr184 contributes to the substrate binding site.

It belongs to the type III pantothenate kinase family. As to quaternary structure, homodimer. NH4(+) is required as a cofactor. K(+) serves as cofactor.

The protein resides in the cytoplasm. It carries out the reaction (R)-pantothenate + ATP = (R)-4'-phosphopantothenate + ADP + H(+). It functions in the pathway cofactor biosynthesis; coenzyme A biosynthesis; CoA from (R)-pantothenate: step 1/5. In terms of biological role, catalyzes the phosphorylation of pantothenate (Pan), the first step in CoA biosynthesis. The chain is Type III pantothenate kinase from Roseiflexus castenholzii (strain DSM 13941 / HLO8).